Here is a 374-residue protein sequence, read N- to C-terminus: Ribosomal RNA large subunit methyltransferase G (374 aa).

Belongs to the methyltransferase superfamily. RlmG family.

The protein localises to the cytoplasm. It carries out the reaction guanosine(1835) in 23S rRNA + S-adenosyl-L-methionine = N(2)-methylguanosine(1835) in 23S rRNA + S-adenosyl-L-homocysteine + H(+). Its function is as follows. Specifically methylates the guanine in position 1835 (m2G1835) of 23S rRNA. The protein is Ribosomal RNA large subunit methyltransferase G of Pseudomonas fluorescens (strain Pf0-1).